A 418-amino-acid chain; its full sequence is Beta-arrestin-1 (418 aa).

The segment at methionine 1–serine 163 is interaction with SRC. Residues proline 45–serine 86 are interaction with CHRM2. A Phosphotyrosine modification is found at tyrosine 47. Lysine 250, methionine 255, lysine 324, and lysine 326 together coordinate 1D-myo-inositol hexakisphosphate. Residues isoleucine 318–arginine 418 are interaction with TRAF6. The disordered stretch occupies residues histidine 353 to asparagine 375. A compositionally biased stretch (basic and acidic residues) spans lysine 355–proline 366. Residues aspartate 385–arginine 395 carry the [DE]-X(1,2)-F-X-X-[FL]-X-X-X-R motif motif. The tract at residues lysine 397–arginine 418 is disordered. Residue serine 412 is modified to Phosphoserine; by GRK5.

The protein belongs to the arrestin family. In terms of assembly, monomer. Homodimer. Homooligomer; the self-association is mediated by InsP6-binding. Heterooligomer with ARRB2; the association is mediated by InsP6-binding. Interacts with GPR143. Interacts with ADRB2 (phosphorylated). Interacts with CHRM2 (phosphorylated). Interacts with LHCGR. Interacts with CYTH2 and CASR. Interacts with AP2B1 (dephosphorylated at 'Tyr-737'); phosphorylation of AP2B1 at 'Tyr-737' disrupts the interaction. Interacts (dephosphorylated at Ser-412) with CLTC. Interacts with CCR2 and GRK2. Interacts with CRR5. Interacts with PTAFR (phosphorylated on serine residues). Interacts with CLTC and MAP2K3. Interacts with CREB1. Interacts with TRAF6. Interacts with IGF1R and MDM2. Interacts with C5AR1. Interacts with PDE4D. Interacts with SRC (via the SH3 domain and the protein kinase domain); the interaction is independent of the phosphorylation state of SRC C-terminus. Interacts with TACR1. Interacts with RAF1. Interacts with CHUK, IKBKB and MAP3K14. Interacts with DVL1; the interaction is enhanced by phosphorylation of DVL1. Interacts with DVL2; the interaction is enhanced by phosphorylation of DVL2. Interacts with IGF1R. Associates with MAP kinase p38. Part of a MAPK signaling complex consisting of TACR1, ARRB1, SRC, MAPK1 (activated) and MAPK3 (activated). Part of a MAPK signaling complex consisting of F2RL1, ARRB1, RAF1, MAPK1 (activated) and MAPK3 (activated). Interacts with MAP2K4/MKK4. Interacts with HCK and CXCR1 (phosphorylated). Interacts with ACKR3 and ACKR4. Interacts with ARRDC1; the interaction is direct. Interacts with GPR61, GPR62 and GPR135. Post-translationally, constitutively phosphorylated at Ser-412 in the cytoplasm. At the plasma membrane, is rapidly dephosphorylated, a process that is required for clathrin binding and ADRB2 endocytosis but not for ADRB2 binding and desensitization. Once internalized, is rephosphorylated. The ubiquitination status appears to regulate the formation and trafficking of beta-arrestin-GPCR complexes and signaling. Ubiquitination appears to occur GPCR-specific. Ubiquitinated by MDM2; the ubiquitination is required for rapid internalization of ADRB2. Deubiquitinated by USP33; the deubiquitination leads to a dissociation of the beta-arrestin-GPCR complex. Stimulation of a class A GPCR, such as ADRB2, induces transient ubiquitination and subsequently promotes association with USP33.

Its subcellular location is the cytoplasm. The protein localises to the nucleus. The protein resides in the cell membrane. It is found in the membrane. It localises to the clathrin-coated pit. Its subcellular location is the cell projection. The protein localises to the pseudopodium. The protein resides in the cytoplasmic vesicle. Its function is as follows. Functions in regulating agonist-mediated G-protein coupled receptor (GPCR) signaling by mediating both receptor desensitization and resensitization processes. During homologous desensitization, beta-arrestins bind to the GPRK-phosphorylated receptor and sterically preclude its coupling to the cognate G-protein; the binding appears to require additional receptor determinants exposed only in the active receptor conformation. The beta-arrestins target many receptors for internalization by acting as endocytic adapters (CLASPs, clathrin-associated sorting proteins) and recruiting the GPRCs to the adapter protein 2 complex 2 (AP-2) in clathrin-coated pits (CCPs). However, the extent of beta-arrestin involvement appears to vary significantly depending on the receptor, agonist and cell type. Internalized arrestin-receptor complexes traffic to intracellular endosomes, where they remain uncoupled from G-proteins. Two different modes of arrestin-mediated internalization occur. Class A receptors, like ADRB2, OPRM1, ENDRA, D1AR and ADRA1B dissociate from beta-arrestin at or near the plasma membrane and undergo rapid recycling. Class B receptors, like AVPR2, AGTR1, NTSR1, TRHR and TACR1 internalize as a complex with arrestin and traffic with it to endosomal vesicles, presumably as desensitized receptors, for extended periods of time. Receptor resensitization then requires that receptor-bound arrestin is removed so that the receptor can be dephosphorylated and returned to the plasma membrane. Involved in internalization of P2RY4 and UTP-stimulated internalization of P2RY2. Involved in phosphorylation-dependent internalization of OPRD1 ands subsequent recycling. Involved in the degradation of cAMP by recruiting cAMP phosphodiesterases to ligand-activated receptors. Beta-arrestins function as multivalent adapter proteins that can switch the GPCR from a G-protein signaling mode that transmits short-lived signals from the plasma membrane via small molecule second messengers and ion channels to a beta-arrestin signaling mode that transmits a distinct set of signals that are initiated as the receptor internalizes and transits the intracellular compartment. Acts as a signaling scaffold for MAPK pathways such as MAPK1/3 (ERK1/2). ERK1/2 activated by the beta-arrestin scaffold is largely excluded from the nucleus and confined to cytoplasmic locations such as endocytic vesicles, also called beta-arrestin signalosomes. Recruits c-Src/SRC to ADRB2 resulting in ERK activation. GPCRs for which the beta-arrestin-mediated signaling relies on both ARRB1 and ARRB2 (codependent regulation) include ADRB2, F2RL1 and PTH1R. For some GPCRs the beta-arrestin-mediated signaling relies on either ARRB1 or ARRB2 and is inhibited by the other respective beta-arrestin form (reciprocal regulation). Inhibits ERK1/2 signaling in AGTR1- and AVPR2-mediated activation (reciprocal regulation). Is required for SP-stimulated endocytosis of NK1R and recruits c-Src/SRC to internalized NK1R resulting in ERK1/2 activation, which is required for the antiapoptotic effects of SP. Is involved in proteinase-activated F2RL1-mediated ERK activity. Acts as a signaling scaffold for the AKT1 pathway. Is involved in alpha-thrombin-stimulated AKT1 signaling. Is involved in IGF1-stimulated AKT1 signaling leading to increased protection from apoptosis. Involved in activation of the p38 MAPK signaling pathway and in actin bundle formation. Involved in F2RL1-mediated cytoskeletal rearrangement and chemotaxis. Involved in AGTR1-mediated stress fiber formation by acting together with GNAQ to activate RHOA. Appears to function as signaling scaffold involved in regulation of MIP-1-beta-stimulated CCR5-dependent chemotaxis. Involved in attenuation of NF-kappa-B-dependent transcription in response to GPCR or cytokine stimulation by interacting with and stabilizing CHUK. May serve as nuclear messenger for GPCRs. Involved in OPRD1-stimulated transcriptional regulation by translocating to CDKN1B and FOS promoter regions and recruiting EP300 resulting in acetylation of histone H4. Involved in regulation of LEF1 transcriptional activity via interaction with DVL1 and/or DVL2 Also involved in regulation of receptors other than GPCRs. Involved in Toll-like receptor and IL-1 receptor signaling through the interaction with TRAF6 which prevents TRAF6 autoubiquitination and oligomerization required for activation of NF-kappa-B and JUN. Binds phosphoinositides. Binds inositolhexakisphosphate (InsP6). Involved in IL8-mediated granule release in neutrophils. Required for atypical chemokine receptor ACKR2-induced RAC1-LIMK1-PAK1-dependent phosphorylation of cofilin (CFL1) and for the up-regulation of ACKR2 from endosomal compartment to cell membrane, increasing its efficiency in chemokine uptake and degradation. Involved in the internalization of the atypical chemokine receptor ACKR3. Negatively regulates the NOTCH signaling pathway by mediating the ubiquitination and degradation of NOTCH1 by ITCH. Participates in the recruitment of the ubiquitin-protein ligase to the receptor. This Homo sapiens (Human) protein is Beta-arrestin-1 (ARRB1).